Reading from the N-terminus, the 450-residue chain is UDP-N-acetylmuramoylalanine--D-glutamate ligase (450 aa).

119-125 contributes to the ATP binding site; that stretch reads GSNGKTT.

The protein belongs to the MurCDEF family.

The protein resides in the cytoplasm. It catalyses the reaction UDP-N-acetyl-alpha-D-muramoyl-L-alanine + D-glutamate + ATP = UDP-N-acetyl-alpha-D-muramoyl-L-alanyl-D-glutamate + ADP + phosphate + H(+). The protein operates within cell wall biogenesis; peptidoglycan biosynthesis. Cell wall formation. Catalyzes the addition of glutamate to the nucleotide precursor UDP-N-acetylmuramoyl-L-alanine (UMA). The polypeptide is UDP-N-acetylmuramoylalanine--D-glutamate ligase (Bacillus cereus (strain Q1)).